The chain runs to 466 residues: Uronate isomerase (466 aa).

It belongs to the metallo-dependent hydrolases superfamily. Uronate isomerase family.

The catalysed reaction is D-glucuronate = D-fructuronate. It carries out the reaction aldehydo-D-galacturonate = keto-D-tagaturonate. Its pathway is carbohydrate metabolism; pentose and glucuronate interconversion. This is Uronate isomerase from Streptococcus pneumoniae (strain 70585).